The chain runs to 407 residues: uncharacterized protein (407 aa).

The EAL domain maps to 1 to 250 (MLDPLDILTN…LERDVLKQRL (250 aa)).

This is an uncharacterized protein from Bacillus subtilis (strain 168).